Consider the following 109-residue polypeptide: ATP synthase subunit c (109 aa).

2 helical membrane passes run tyrosine 42–serine 62 and leucine 88–valine 108.

It belongs to the ATPase C chain family. In terms of assembly, F-type ATPases have 2 components, F(1) - the catalytic core - and F(0) - the membrane proton channel. F(1) has five subunits: alpha(3), beta(3), gamma(1), delta(1), epsilon(1). F(0) has three main subunits: a(1), b(2) and c(10-14). The alpha and beta chains form an alternating ring which encloses part of the gamma chain. F(1) is attached to F(0) by a central stalk formed by the gamma and epsilon chains, while a peripheral stalk is formed by the delta and b chains.

It localises to the cell membrane. F(1)F(0) ATP synthase produces ATP from ADP in the presence of a proton or sodium gradient. F-type ATPases consist of two structural domains, F(1) containing the extramembraneous catalytic core and F(0) containing the membrane proton channel, linked together by a central stalk and a peripheral stalk. During catalysis, ATP synthesis in the catalytic domain of F(1) is coupled via a rotary mechanism of the central stalk subunits to proton translocation. Functionally, key component of the F(0) channel; it plays a direct role in translocation across the membrane. A homomeric c-ring of between 10-14 subunits forms the central stalk rotor element with the F(1) delta and epsilon subunits. This chain is ATP synthase subunit c, found in Ureaplasma urealyticum serovar 10 (strain ATCC 33699 / Western).